A 515-amino-acid chain; its full sequence is Zinc metalloproteinase-disintegrin BA-5A (515 aa).

The first 20 residues, 1 to 20, serve as a signal peptide directing secretion; it reads MMQVLLVTICLAVFPYQGSS. Positions 21–193 are excised as a propeptide; sequence IILESGNVND…KEASQLVATS (173 aa). In terms of domain architecture, Peptidase M12B spans 203–399; the sequence is RYIKYFIVVD…YKPDCTLIRP (197 aa). An N-linked (GlcNAc...) asparagine glycan is attached at N263. Intrachain disulfides connect C314–C394, C354–C378, C356–C361, C410–C429, C421–C439, C423–C434, C433–C456, C447–C453, C452–C478, C465–C485, and C472–C497. H339 is a Zn(2+) binding site. E340 is a catalytic residue. 2 residues coordinate Zn(2+): H343 and H349. N-linked (GlcNAc...) asparagine glycosylation is present at N377. The region spanning 407–493 is the Disintegrin domain; it reads PPVCGNDILE…DCPIDHFHRN (87 aa). The D/ECD-tripeptide motif lies at 471–473; it reads ECD.

The protein belongs to the venom metalloproteinase (M12B) family. P-II subfamily. As to quaternary structure, monomer. Zn(2+) serves as cofactor. As to expression, expressed by the venom gland.

It localises to the secreted. Snake venom zinc metalloprotease that possesses hemorrhagic activity and degrades alpha chain of fibrinogen (FGA). May inhibit alpha-2/beta-1 integrin (ITGA2/ITGB1). The sequence is that of Zinc metalloproteinase-disintegrin BA-5A from Bitis arietans (African puff adder).